Consider the following 152-residue polypeptide: Transcriptional regulator MraZ (152 aa).

2 SpoVT-AbrB domains span residues 5–52 (ATLV…TLPE) and 81–124 (ASEC…DEQV).

The protein belongs to the MraZ family. In terms of assembly, forms oligomers.

Its subcellular location is the cytoplasm. It localises to the nucleoid. Functionally, negatively regulates its own expression and that of the subsequent genes in the proximal part of the division and cell wall (dcw) gene cluster. Acts by binding directly to DNA. May also regulate the expression of genes outside the dcw cluster. This chain is Transcriptional regulator MraZ, found in Proteus mirabilis (strain HI4320).